We begin with the raw amino-acid sequence, 329 residues long: Prostaglandin reductase 1 (329 aa).

At T18 the chain carries Phosphothreonine. S20 is modified (phosphoserine). NADP(+) contacts are provided by residues 152–155 (GAVG), K178, Y193, N217, 239–245 (CGAISVY), 270–272 (FVV), and N321. K178 carries the N6-(2-hydroxyisobutyryl)lysine; alternate modification. K178 carries the N6-acetyllysine; alternate modification.

The protein belongs to the NADP-dependent oxidoreductase L4BD family. As to quaternary structure, monomer or homodimer.

Its subcellular location is the cytoplasm. It catalyses the reaction 13,14-dihydro-15-oxo-prostaglandin E1 + NADP(+) = 15-oxoprostaglandin E1 + NADPH + H(+). The enzyme catalyses 13,14-dihydro-15-oxo-prostaglandin E2 + NADP(+) = 15-oxoprostaglandin E2 + NADPH + H(+). The catalysed reaction is 13,14-dihydro-15-oxo-prostaglandin F1alpha + NADP(+) = 15-oxoprostaglandin F1alpha + NADPH + H(+). It carries out the reaction 13,14-dihydro-15-oxo-PGF2alpha + NADP(+) = 15-oxoprostaglandin F2alpha + NADPH + H(+). It catalyses the reaction leukotriene B4 + NADP(+) = 12-oxo-leukotriene B4 + NADPH + H(+). The enzyme catalyses 20-hydroxy-leukotriene B4 + NADP(+) = 12-oxo-20-hydroxy-leukotriene B4 + NADPH + H(+). The catalysed reaction is 6-trans-leukotriene B4 + NADP(+) = 12-oxo-(5S)-hydroxy-(6E,8E,10E,14Z)-eicosatetraenoate + NADPH + H(+). It carries out the reaction (5S,12S)-dihydroxy-(6E,10E,12E,14Z)-eicosatetraenoate + NADP(+) = 12-oxo-(5S)-hydroxy-(6E,8E,10E,14Z)-eicosatetraenoate + NADPH + H(+). It catalyses the reaction an n-alkanal + NADP(+) = an alk-2-enal + NADPH + H(+). The enzyme catalyses hexanal + NADP(+) = (E)-hex-2-enal + NADPH + H(+). The catalysed reaction is octanal + NADP(+) = (2E)-octenal + NADPH + H(+). It carries out the reaction decanal + NADP(+) = (2E)-decenal + NADPH + H(+). It catalyses the reaction dodecanal + NADP(+) = (2E)-dodecenal + NADPH + H(+). The enzyme catalyses 4-hydroxynonanal + NADP(+) = (E)-4-hydroxynon-2-enal + NADPH + H(+). The catalysed reaction is pentan-2-one + NADP(+) = (E)-pent-3-en-2-one + NADPH + H(+). It carries out the reaction nonan-2-one + NADP(+) = (3E)-nonen-2-one + NADPH + H(+). NAD(P)H-dependent oxidoreductase involved in metabolic inactivation of pro- and anti-inflammatory eicosanoids: prostaglandins (PG), leukotrienes (LT) and lipoxins (LX). Catalyzes with high efficiency the reduction of the 13,14 double bond of 15-oxoPGs, including 15-oxo-PGE1, 15-oxo-PGE2, 15-oxo-PGF1-alpha and 15-oxo-PGF2-alpha. Catalyzes with lower efficiency the oxidation of the hydroxyl group at C12 of LTB4 and its derivatives, converting them into biologically less active 12-oxo-LTB4 metabolites. Reduces 15-oxo-LXA4 to 13,14 dihydro-15-oxo-LXA4, enhancing neutrophil recruitment at the inflammatory site. Plays a role in metabolic detoxification of alkenals and ketones. Reduces alpha,beta-unsaturated alkenals and ketones, particularly those with medium-chain length, showing highest affinity toward (2E)-decenal and (3E)-3-nonen-2-one. May inactivate 4-hydroxy-2-nonenal, a cytotoxic lipid constituent of oxidized low-density lipoprotein particles. The chain is Prostaglandin reductase 1 (PTGR1) from Bos taurus (Bovine).